We begin with the raw amino-acid sequence, 78 residues long: Large ribosomal subunit protein uL23 (78 aa).

Belongs to the universal ribosomal protein uL23 family. Part of the 50S ribosomal subunit. Contacts protein L29.

Binds to 23S rRNA. One of the proteins that surrounds the polypeptide exit tunnel on the outside of the ribosome. This Nanoarchaeum equitans (strain Kin4-M) protein is Large ribosomal subunit protein uL23.